The following is a 362-amino-acid chain: Ribosomal RNA large subunit methyltransferase M (362 aa).

S-adenosyl-L-methionine is bound by residues S187, 220 to 223 (CPGG), D239, D259, and D276. The Proton acceptor role is filled by K305.

Belongs to the class I-like SAM-binding methyltransferase superfamily. RNA methyltransferase RlmE family. RlmM subfamily. As to quaternary structure, monomer.

The protein resides in the cytoplasm. The catalysed reaction is cytidine(2498) in 23S rRNA + S-adenosyl-L-methionine = 2'-O-methylcytidine(2498) in 23S rRNA + S-adenosyl-L-homocysteine + H(+). In terms of biological role, catalyzes the 2'-O-methylation at nucleotide C2498 in 23S rRNA. In Shewanella frigidimarina (strain NCIMB 400), this protein is Ribosomal RNA large subunit methyltransferase M.